Reading from the N-terminus, the 301-residue chain is Hydroxyquinol 1,2-dioxygenase (301 aa).

Positions 169, 202, 226, and 228 each coordinate Fe cation.

Belongs to the intradiol ring-cleavage dioxygenase family. Fe(3+) serves as cofactor.

The enzyme catalyses benzene-1,2,4-triol + O2 = maleylacetate + 2 H(+). Its pathway is aromatic compound metabolism. Functionally, involved in resorcinol degradation. Catalyzes the conversion of hydroxyquinol to malelylacetate. Also shows weak activity with catechol, 3-methylcatechol and 4-methylcatechol, but cannot use 4-chlorocatechol, 4-nitrocatechol or protocatechuate. The sequence is that of Hydroxyquinol 1,2-dioxygenase from Corynebacterium glutamicum (strain ATCC 13032 / DSM 20300 / JCM 1318 / BCRC 11384 / CCUG 27702 / LMG 3730 / NBRC 12168 / NCIMB 10025 / NRRL B-2784 / 534).